A 180-amino-acid chain; its full sequence is p-cumate 2,3-dioxygenase system, small oxygenase component (180 aa).

It belongs to the bacterial ring-hydroxylating dioxygenase beta subunit family. The p-cumate 2,3-dioxygenase multicomponent enzyme system is composed of an electron transfer component and a dioxygenase component (iron sulfur protein (ISP)). The electron transfer component is composed of a ferredoxin reductase (CmtAa) and a ferredoxin (CmtAd), and the dioxygenase component is formed of a large alpha subunit (CmtAb) and a small beta subunit (CmtAc).

It functions in the pathway aromatic compound metabolism; p-cumate degradation; acetaldehyde and pyruvate from p-cumate. Component of the p-cumate 2,3-dioxygenase multicomponent enzyme system which catalyzes the incorporation of both atoms of molecular oxygen into p-cumate to form cis-2,3-dihydroxy-2,3-dihydro-p-cumate. The beta subunit seems to have a structural role in the holoenzyme. Also able to catalyze the cis-dihydroxylation of indole-2-carboxylate and indole-3-carboxylate. The sequence is that of p-cumate 2,3-dioxygenase system, small oxygenase component from Pseudomonas putida (Arthrobacter siderocapsulatus).